The chain runs to 750 residues: Cation-transporting P-type ATPase B (750 aa).

Residues 17-80 enclose the HMA domain; the sequence is RRIQLDVAGM…VIEQAGYRAT (64 aa). 2 residues coordinate a metal cation: Cys-28 and Cys-31. 6 helical membrane passes run 104–124, 129–149, 167–187, 200–220, 360–380, and 389–409; these read LIVA…FAIV, FPGW…WAAW, ETLI…TIFV, AILH…VFVL, IAAV…ASWL, and AFSV…GLAT. Catalysis depends on Asp-445, which acts as the 4-aspartylphosphate intermediate. 6 helical membrane passes run 471-491, 500-520, 547-567, 663-683, 693-713, and 715-735; these read VLAL…TAIV, VADF…EHHV, SRGE…AVAI, VAIG…VPVA, TIRI…PIAS, and GLLN…FVVS.

The protein belongs to the cation transport ATPase (P-type) (TC 3.A.3) family. Type IB subfamily.

The protein localises to the cell membrane. It catalyses the reaction ATP + H2O = ADP + phosphate + H(+). This chain is Cation-transporting P-type ATPase B (ctpB), found in Mycobacterium leprae (strain TN).